We begin with the raw amino-acid sequence, 65 residues long: Large ribosomal subunit protein bL35 (65 aa).

This sequence belongs to the bacterial ribosomal protein bL35 family.

The polypeptide is Large ribosomal subunit protein bL35 (Parasynechococcus marenigrum (strain WH8102)).